The chain runs to 319 residues: Acetyl-coenzyme A carboxylase carboxyl transferase subunit alpha (319 aa).

Residues 35 to 296 (DLDKEIEQLE…KATLVANLAE (262 aa)) form the CoA carboxyltransferase C-terminal domain.

The protein belongs to the AccA family. In terms of assembly, acetyl-CoA carboxylase is a heterohexamer composed of biotin carboxyl carrier protein (AccB), biotin carboxylase (AccC) and two subunits each of ACCase subunit alpha (AccA) and ACCase subunit beta (AccD).

It is found in the cytoplasm. It carries out the reaction N(6)-carboxybiotinyl-L-lysyl-[protein] + acetyl-CoA = N(6)-biotinyl-L-lysyl-[protein] + malonyl-CoA. It participates in lipid metabolism; malonyl-CoA biosynthesis; malonyl-CoA from acetyl-CoA: step 1/1. In terms of biological role, component of the acetyl coenzyme A carboxylase (ACC) complex. First, biotin carboxylase catalyzes the carboxylation of biotin on its carrier protein (BCCP) and then the CO(2) group is transferred by the carboxyltransferase to acetyl-CoA to form malonyl-CoA. In Photobacterium profundum (strain SS9), this protein is Acetyl-coenzyme A carboxylase carboxyl transferase subunit alpha.